Here is a 223-residue protein sequence, read N- to C-terminus: Holliday junction branch migration complex subunit RuvA (223 aa).

A domain I region spans residues 1-67; that stretch reads MIGWLKGEKI…EDGSNLFGFI (67 aa). Residues 68-146 are domain II; that stretch reads EKSERDLFRK…DFDLNNEFSP (79 aa). Positions 147–157 are flexible linker; that stretch reads PTKLRPESAED. The interval 158-223 is domain III; it reads LNEELLTEIK…FKQALITLNK (66 aa).

This sequence belongs to the RuvA family. Homotetramer. Forms an RuvA(8)-RuvB(12)-Holliday junction (HJ) complex. HJ DNA is sandwiched between 2 RuvA tetramers; dsDNA enters through RuvA and exits via RuvB. An RuvB hexamer assembles on each DNA strand where it exits the tetramer. Each RuvB hexamer is contacted by two RuvA subunits (via domain III) on 2 adjacent RuvB subunits; this complex drives branch migration. In the full resolvosome a probable DNA-RuvA(4)-RuvB(12)-RuvC(2) complex forms which resolves the HJ.

It localises to the cytoplasm. The RuvA-RuvB-RuvC complex processes Holliday junction (HJ) DNA during genetic recombination and DNA repair, while the RuvA-RuvB complex plays an important role in the rescue of blocked DNA replication forks via replication fork reversal (RFR). RuvA specifically binds to HJ cruciform DNA, conferring on it an open structure. The RuvB hexamer acts as an ATP-dependent pump, pulling dsDNA into and through the RuvAB complex. HJ branch migration allows RuvC to scan DNA until it finds its consensus sequence, where it cleaves and resolves the cruciform DNA. This Prochlorococcus marinus (strain MIT 9211) protein is Holliday junction branch migration complex subunit RuvA.